A 153-amino-acid chain; its full sequence is Endoribonuclease YbeY (153 aa).

Positions 113, 117, and 123 each coordinate Zn(2+).

The protein belongs to the endoribonuclease YbeY family. Requires Zn(2+) as cofactor.

It is found in the cytoplasm. In terms of biological role, single strand-specific metallo-endoribonuclease involved in late-stage 70S ribosome quality control and in maturation of the 3' terminus of the 16S rRNA. The chain is Endoribonuclease YbeY from Aliivibrio salmonicida (strain LFI1238) (Vibrio salmonicida (strain LFI1238)).